We begin with the raw amino-acid sequence, 1649 residues long: Cortactin-binding protein 2 (1649 aa).

The disordered stretch occupies residues 1–23; that stretch reads MATDGASCEPDLSRAPEDAAGAA. Residues 119 to 276 are a coiled coil; it reads RKMQERMSAQ…EQLKRGSDSK (158 aa). Disordered stretches follow at residues 366 to 440 and 454 to 478; these read IGVS…LHPG and GNAN…SPTS. Composition is skewed to low complexity over residues 368–379 and 386–396; these read VSVPAFPPSSAS and PSTGSTPDPTS. Residues 411–422 show a composition bias toward polar residues; sequence QTPGITPQNSQA. Arg498 is subject to Asymmetric dimethylarginine. A disordered region spans residues 499 to 616; that stretch reads FTGPQAGAPP…SSPQLPPKPS (118 aa). Residues 583 to 593 are compositionally biased toward polar residues; the sequence is TVASPPSSLPQ. ANK repeat units lie at residues 709-739, 743-772, 776-805, 809-838, and 842-871; these read GRPT…DINY, DGHS…QVNA, NGFT…NINH, GGQT…DRSV, and DGWT…PAHG. The disordered stretch occupies residues 872 to 897; that stretch reads NSFSEEESESGVFDLDGGEESPEGKS. An ANK 6 repeat occupies 912-942; sequence EGWTAAHIAASKGFKNCLEILCRHGGLETER. The disordered stretch occupies residues 1444–1482; that stretch reads SCSKKKGESGAWRRVNTSPRRKSSRFSLPTWNKPDLSNE. Ser1524 carries the post-translational modification Phosphoserine. The disordered stretch occupies residues 1616-1649; that stretch reads PRSKVTQCSQNTKRSSSSSNTRQIEINNNSKEEN. The segment covering 1624–1638 has biased composition (low complexity); the sequence is SQNTKRSSSSSNTRQ. Polar residues predominate over residues 1639-1649; that stretch reads IEINNNSKEEN.

As to quaternary structure, interacts with CTTN/cortactin SH3 domain. Interacts with STRN, STRN4/zinedin and MOB4/phocein; this interactions mediate the association with the STRIPAK core complex and may regulate dendritic spine distribution of the STRIPAK complex in hippocampal neurons. Activation of glutamate receptors weakens the interaction with STRN and STRN4.

It localises to the cytoplasm. The protein resides in the cell cortex. The protein localises to the cell projection. Its subcellular location is the dendritic spine. Regulates the dendritic spine distribution of CTTN/cortactin in hippocampal neurons, and thus controls dendritic spinogenesis and dendritic spine maintenance. Associates with the striatin-interacting phosphatase and kinase (STRIPAK) core complex to regulate dendritic spine distribution of the STRIPAK complex in hippocampal neurons. The polypeptide is Cortactin-binding protein 2 (CTTNBP2) (Aotus nancymaae (Ma's night monkey)).